The following is a 758-amino-acid chain: Matrix metalloproteinase-2 (758 aa).

The signal sequence occupies residues 1 to 17 (MFSKYVLATLLALFAQS). Residue His257 participates in Zn(2+) binding. Residue Glu258 is part of the active site. His261 and His267 together coordinate Zn(2+). The interval 335–514 (AYWPWNNPSN…HNKPRKPKPD (180 aa)) is disordered. Residues 338-348 (PWNNPSNNPNN) show a composition bias toward low complexity. Basic and acidic residues predominate over residues 349-476 (DRNRARERQE…EWERRNRNGA (128 aa)). Positions 479 to 494 (PVTPTANTTPRPTNKP) are enriched in low complexity. Positions 499 to 510 (HRQHHHHNKPRK) are enriched in basic residues. Hemopexin repeat units lie at residues 513–561 (PDSC…WSAL), 565–610 (LTKV…GLPP), 612–659 (LTHI…WSGV), and 660–707 (GYNI…WMQC). Cysteines 516 and 707 form a disulfide. The chain crosses the membrane as a helical span at residues 739-756 (LRINHFILSILLLAIANW). The Cytoplasmic segment spans residues 757-758 (RS).

It belongs to the peptidase M10A family. Requires Ca(2+) as cofactor. Zn(2+) serves as cofactor. As to expression, widely expressed during embryogenesis including in the mesoderm, developing gut, central and peripheral nervous systems and imaginal disks. In the embryonic nervous system, expressed in neurons and glia. In third instar larvae, strongly expressed in the morphogenetic furrow of eye imaginal disks and in the optic lobe region of the brain. Expressed in posterior follicle cells in all mature stage 14 follicles but not in earlier follicles and is also expressed in some anterior follicle cells that help form dorsal eggshell structures.

It localises to the cell membrane. Functionally, has metalloproteinase activity. Proteolytically cleaves the PGRP-LC receptor; involved in gut-fat body innate immunological communication (GFIC)-mediated activation of the imd/Relish signal transduction pathway. Required for larval tissue histolysis during metamorphosis and is involved in pupal head eversion and fusion of the wing imaginal tissue. Required for growth of the dorsal air sac primordium and development of the dorsal air sacs. Promotes embryonic motor axon fasciculation. Cleaves and activates frac to promote motor axon bundling during outgrowth. Promotes the reshaping of adult sensory neuron dendrites from a radial to lattice-like shape which occurs after eclosion by degrading the basement membrane on which the dendrites grow. Involved in inhibition of follicle stem cell proliferation by cleaving Dlp, inhibiting its interaction with wg and preventing Dlp-mediated spreading of wg to follicle stem cells to enhance their proliferation. Plays a role in wound healing. Involved in fat body dissociation which occurs during metamorphosis by degrading basement membrane components, leading to destruction of cell-basement membrane junctions. Required for posterior follicle cell degradation and ovulation. The sequence is that of Matrix metalloproteinase-2 from Drosophila melanogaster (Fruit fly).